We begin with the raw amino-acid sequence, 361 residues long: Elongator complex protein 4 (361 aa).

Disordered stretches follow at residues 93 to 124 and 338 to 361; these read QLPG…PQQE and DDEQ…SLDF. Polar residues-rich tracts occupy residues 104–121 and 346–355; these read NENS…SKNP and ISNTNPQKQP.

This sequence belongs to the ELP4 family. In terms of assembly, component of the elongator complex.

It is found in the cytoplasm. It localises to the nucleus. The protein operates within tRNA modification; 5-methoxycarbonylmethyl-2-thiouridine-tRNA biosynthesis. In terms of biological role, component of the elongator complex, a multiprotein complex which is required for multiple tRNA modifications, including mcm5U (5-methoxycarbonylmethyl uridine), mcm5s2U (5-methoxycarbonylmethyl-2-thiouridine), and ncm5U (5-carbamoylmethyl uridine). The elongator complex catalyzes formation of carboxymethyluridine in the wobble base at position 34 in tRNAs. This Schizosaccharomyces pombe (strain 972 / ATCC 24843) (Fission yeast) protein is Elongator complex protein 4.